A 275-amino-acid chain; its full sequence is Formamidopyrimidine-DNA glycosylase (275 aa).

Pro2 functions as the Schiff-base intermediate with DNA in the catalytic mechanism. Catalysis depends on Glu3, which acts as the Proton donor. The active-site Proton donor; for beta-elimination activity is Lys58. Positions 93, 111, and 156 each coordinate DNA. The FPG-type zinc finger occupies 241-275; sequence FAYDRAGLPCRVCGTPIRQIVQGQRSTYFCPTCQR. Arg265 serves as the catalytic Proton donor; for delta-elimination activity.

It belongs to the FPG family. Monomer. Zn(2+) serves as cofactor.

It catalyses the reaction Hydrolysis of DNA containing ring-opened 7-methylguanine residues, releasing 2,6-diamino-4-hydroxy-5-(N-methyl)formamidopyrimidine.. The enzyme catalyses 2'-deoxyribonucleotide-(2'-deoxyribose 5'-phosphate)-2'-deoxyribonucleotide-DNA = a 3'-end 2'-deoxyribonucleotide-(2,3-dehydro-2,3-deoxyribose 5'-phosphate)-DNA + a 5'-end 5'-phospho-2'-deoxyribonucleoside-DNA + H(+). In terms of biological role, involved in base excision repair of DNA damaged by oxidation or by mutagenic agents. Acts as a DNA glycosylase that recognizes and removes damaged bases. Has a preference for oxidized purines, such as 7,8-dihydro-8-oxoguanine (8-oxoG). Has AP (apurinic/apyrimidinic) lyase activity and introduces nicks in the DNA strand. Cleaves the DNA backbone by beta-delta elimination to generate a single-strand break at the site of the removed base with both 3'- and 5'-phosphates. The polypeptide is Formamidopyrimidine-DNA glycosylase (Burkholderia vietnamiensis (strain G4 / LMG 22486) (Burkholderia cepacia (strain R1808))).